Reading from the N-terminus, the 605-residue chain is Probable Xaa-Pro aminopeptidase P (605 aa).

4 residues coordinate Mn(2+): D402, D413, E511, and E525.

The protein belongs to the peptidase M24B family. Mn(2+) is required as a cofactor.

It catalyses the reaction Release of any N-terminal amino acid, including proline, that is linked to proline, even from a dipeptide or tripeptide.. Catalyzes the removal of a penultimate prolyl residue from the N-termini of peptides. The sequence is that of Probable Xaa-Pro aminopeptidase P (AMPP) from Leptosphaeria maculans (strain JN3 / isolate v23.1.3 / race Av1-4-5-6-7-8) (Blackleg fungus).